The following is a 94-amino-acid chain: Conotoxin Qc6.1 (94 aa).

An N-terminal signal peptide occupies residues 1–22 (MKLTCMMIVALLFLTAWTFVTA). Positions 23–62 (VDSKNELENRGGWGQAGGWGKLFPMARDEMKNSEVSKLDN) are excised as a propeptide. 3 disulfide bridges follow: cysteine 66–cysteine 84, cysteine 73–cysteine 88, and cysteine 83–cysteine 92.

The protein belongs to the conotoxin O1 superfamily. Expressed by the venom duct.

The protein localises to the secreted. The chain is Conotoxin Qc6.1 from Conus quercinus (Oak cone).